The following is a 467-amino-acid chain: 3-isopropylmalate dehydratase large subunit (467 aa).

[4Fe-4S] cluster is bound by residues Cys347, Cys407, and Cys410.

This sequence belongs to the aconitase/IPM isomerase family. LeuC type 1 subfamily. As to quaternary structure, heterodimer of LeuC and LeuD. [4Fe-4S] cluster is required as a cofactor.

The enzyme catalyses (2R,3S)-3-isopropylmalate = (2S)-2-isopropylmalate. It functions in the pathway amino-acid biosynthesis; L-leucine biosynthesis; L-leucine from 3-methyl-2-oxobutanoate: step 2/4. In terms of biological role, catalyzes the isomerization between 2-isopropylmalate and 3-isopropylmalate, via the formation of 2-isopropylmaleate. The chain is 3-isopropylmalate dehydratase large subunit from Pelagibacter ubique (strain HTCC1062).